The chain runs to 455 residues: Serine--tRNA ligase (455 aa).

252-254 (TAE) serves as a coordination point for L-serine. ATP-binding positions include 283–285 (RKE) and Val299. Glu306 is a binding site for L-serine. 370–373 (EVVS) serves as a coordination point for ATP. Thr406 contacts L-serine.

It belongs to the class-II aminoacyl-tRNA synthetase family. Type-1 seryl-tRNA synthetase subfamily. Homodimer. The tRNA molecule binds across the dimer.

Its subcellular location is the cytoplasm. The catalysed reaction is tRNA(Ser) + L-serine + ATP = L-seryl-tRNA(Ser) + AMP + diphosphate + H(+). It catalyses the reaction tRNA(Sec) + L-serine + ATP = L-seryl-tRNA(Sec) + AMP + diphosphate + H(+). It functions in the pathway aminoacyl-tRNA biosynthesis; selenocysteinyl-tRNA(Sec) biosynthesis; L-seryl-tRNA(Sec) from L-serine and tRNA(Sec): step 1/1. Its function is as follows. Catalyzes the attachment of serine to tRNA(Ser). Is also able to aminoacylate tRNA(Sec) with serine, to form the misacylated tRNA L-seryl-tRNA(Sec), which will be further converted into selenocysteinyl-tRNA(Sec). The sequence is that of Serine--tRNA ligase from Pyrococcus furiosus (strain ATCC 43587 / DSM 3638 / JCM 8422 / Vc1).